The chain runs to 332 residues: Autoinducer 2 import system permease protein LsrD (332 aa).

Helical transmembrane passes span 7-27, 45-65, 70-90, 91-111, 118-138, 162-182, 216-236, 240-260, 261-281, and 288-308; these read YSWE…FGVI, ICIG…GMDI, TIGL…PLPL, AIII…GLII, LVIT…LSGM, FLGI…FWLL, VYAM…SYFG, SDLG…GGAN, IYGG…VGFL, and AGVP…VVVV.

The protein belongs to the binding-protein-dependent transport system permease family. AraH/RbsC subfamily. The complex is composed of two ATP-binding proteins (LsrA), two transmembrane proteins (LsrC and LsrD) and a solute-binding protein (LsrB).

The protein localises to the cell inner membrane. Functionally, part of the ABC transporter complex LsrABCD involved in autoinducer 2 (AI-2) import. Probably responsible for the translocation of the substrate across the membrane. The polypeptide is Autoinducer 2 import system permease protein LsrD (lsrD) (Salmonella paratyphi A (strain ATCC 9150 / SARB42)).